A 209-amino-acid chain; its full sequence is Thymidylate kinase (209 aa).

ATP is bound at residue 10-17; it reads GLDGAGKS.

This sequence belongs to the thymidylate kinase family.

The enzyme catalyses dTMP + ATP = dTDP + ADP. Phosphorylation of dTMP to form dTDP in both de novo and salvage pathways of dTTP synthesis. This Francisella tularensis subsp. tularensis (strain FSC 198) protein is Thymidylate kinase.